A 160-amino-acid polypeptide reads, in one-letter code: Crossover junction endodeoxyribonuclease RuvC (160 aa).

Catalysis depends on residues Asp-7, Glu-67, and Asp-138. Residues Asp-7, Glu-67, and Asp-138 each coordinate Mg(2+).

It belongs to the RuvC family. In terms of assembly, homodimer which binds Holliday junction (HJ) DNA. The HJ becomes 2-fold symmetrical on binding to RuvC with unstacked arms; it has a different conformation from HJ DNA in complex with RuvA. In the full resolvosome a probable DNA-RuvA(4)-RuvB(12)-RuvC(2) complex forms which resolves the HJ. The cofactor is Mg(2+).

It is found in the cytoplasm. It catalyses the reaction Endonucleolytic cleavage at a junction such as a reciprocal single-stranded crossover between two homologous DNA duplexes (Holliday junction).. Functionally, the RuvA-RuvB-RuvC complex processes Holliday junction (HJ) DNA during genetic recombination and DNA repair. Endonuclease that resolves HJ intermediates. Cleaves cruciform DNA by making single-stranded nicks across the HJ at symmetrical positions within the homologous arms, yielding a 5'-phosphate and a 3'-hydroxyl group; requires a central core of homology in the junction. The consensus cleavage sequence is 5'-(A/T)TT(C/G)-3'. Cleavage occurs on the 3'-side of the TT dinucleotide at the point of strand exchange. HJ branch migration catalyzed by RuvA-RuvB allows RuvC to scan DNA until it finds its consensus sequence, where it cleaves and resolves the cruciform DNA. This is Crossover junction endodeoxyribonuclease RuvC from Brachyspira hyodysenteriae (strain ATCC 49526 / WA1).